The following is a 257-amino-acid chain: Dihydroorotate dehydrogenase B (NAD(+)), electron transfer subunit (257 aa).

Positions 2 to 102 (MKQEQMTVVR…LGPLGNGFPL (101 aa)) constitute an FAD-binding FR-type domain. FAD is bound by residues 53–56 (RPLS), 70–72 (IYR), and 77–78 (GT). Cys221, Cys226, Cys229, and Cys244 together coordinate [2Fe-2S] cluster.

This sequence belongs to the PyrK family. As to quaternary structure, heterotetramer of 2 PyrK and 2 PyrD type B subunits. [2Fe-2S] cluster serves as cofactor. The cofactor is FAD.

It participates in pyrimidine metabolism; UMP biosynthesis via de novo pathway; orotate from (S)-dihydroorotate (NAD(+) route): step 1/1. Functionally, responsible for channeling the electrons from the oxidation of dihydroorotate from the FMN redox center in the PyrD type B subunit to the ultimate electron acceptor NAD(+). In Geobacillus sp. (strain WCH70), this protein is Dihydroorotate dehydrogenase B (NAD(+)), electron transfer subunit.